Consider the following 349-residue polypeptide: tRNA pseudouridine synthase D (349 aa).

Phe-27 contributes to the substrate binding site. Catalysis depends on Asp-80, which acts as the Nucleophile. Asn-129 is a substrate binding site. The 149-residue stretch at 155–303 (GVPNYFGAQR…VEAARRAMLL (149 aa)) folds into the TRUD domain. Residue Phe-329 participates in substrate binding.

This sequence belongs to the pseudouridine synthase TruD family.

It carries out the reaction uridine(13) in tRNA = pseudouridine(13) in tRNA. Its function is as follows. Responsible for synthesis of pseudouridine from uracil-13 in transfer RNAs. The polypeptide is tRNA pseudouridine synthase D (Shigella flexneri).